The sequence spans 489 residues: Glutamyl-tRNA(Gln) amidotransferase subunit A (489 aa).

Active-site charge relay system residues include Lys78 and Ser153. Ser177 serves as the catalytic Acyl-ester intermediate.

This sequence belongs to the amidase family. GatA subfamily. Heterotrimer of A, B and C subunits.

It catalyses the reaction L-glutamyl-tRNA(Gln) + L-glutamine + ATP + H2O = L-glutaminyl-tRNA(Gln) + L-glutamate + ADP + phosphate + H(+). In terms of biological role, allows the formation of correctly charged Gln-tRNA(Gln) through the transamidation of misacylated Glu-tRNA(Gln) in organisms which lack glutaminyl-tRNA synthetase. The reaction takes place in the presence of glutamine and ATP through an activated gamma-phospho-Glu-tRNA(Gln). This Enterococcus faecalis (strain ATCC 700802 / V583) protein is Glutamyl-tRNA(Gln) amidotransferase subunit A.